A 322-amino-acid chain; its full sequence is Tyrosine recombinase XerC (322 aa).

The 91-residue stretch at 14–104 (PDLREAAAAW…ALRSFARHLD (91 aa)) folds into the Core-binding (CB) domain. A Tyr recombinase domain is found at 125 to 311 (RLPRPLPVAA…DSARLLSAFD (187 aa)). Active-site residues include Arg170, Lys195, His263, Arg266, and His289. Tyr298 (O-(3'-phospho-DNA)-tyrosine intermediate) is an active-site residue.

Belongs to the 'phage' integrase family. XerC subfamily. In terms of assembly, forms a cyclic heterotetrameric complex composed of two molecules of XerC and two molecules of XerD.

It localises to the cytoplasm. Functionally, site-specific tyrosine recombinase, which acts by catalyzing the cutting and rejoining of the recombining DNA molecules. The XerC-XerD complex is essential to convert dimers of the bacterial chromosome into monomers to permit their segregation at cell division. It also contributes to the segregational stability of plasmids. The polypeptide is Tyrosine recombinase XerC (Methylobacterium nodulans (strain LMG 21967 / CNCM I-2342 / ORS 2060)).